We begin with the raw amino-acid sequence, 196 residues long: Adenylyl-sulfate kinase (196 aa).

31-38 provides a ligand contact to ATP; the sequence is GLSGAGKS. The active-site Phosphoserine intermediate is the Ser-105.

This sequence belongs to the APS kinase family.

It carries out the reaction adenosine 5'-phosphosulfate + ATP = 3'-phosphoadenylyl sulfate + ADP + H(+). Its pathway is sulfur metabolism; hydrogen sulfide biosynthesis; sulfite from sulfate: step 2/3. Functionally, catalyzes the synthesis of activated sulfate. In Aeromonas salmonicida (strain A449), this protein is Adenylyl-sulfate kinase.